Here is an 832-residue protein sequence, read N- to C-terminus: MISDISFLQDFAEFIVSKFGKENLRKELKIILPNSLSCTKLKGLLTDNYNVQNLPIIIPFNAIISKKDSSEDYMSKMEELFTLSKIITEYKKLDFTPEEALKAAGILNKLFADLVNNNVDIKLIETYNNSEYWQNIYKFLEYSFLKWQKNEKQSSNNYKLKLLLEEIARTKNSCKQVILAGIFKPDSFLKKYEEELQIIKYNEIKLAHNNIYYYEPTDIYEEAEQIAHICKQNADKKIAIVINNNKLKRIYCNYLDKYELVFEDLIGNDLKLTNVSSLLIAIINILCNNFDLKLLFLLLKNPLINCTNIQELELLLSGKNRFISSPKYLLQLQFDNEELKIYCYNLVDILFTTKPYNIKDILVLSKEIFEKILPDIWEKEGGAELSEFLNNLTEFSGSINVSKKDFPKIFALLLSNVKYYKNIESKIIIGSPEELALSRFDLVILPHFNSDNWSNTTTTHPYLSKEAKQILNIDYDEITPKLYSNYFDLLLQNEEVIILNAKKYAGKLSTPCNLFLKLSNKNVIPNKSVIPQLDCGISGVIFLDSTTSTQDDIEQAAHSTFFPNILSVTDIETLIRNPYGFYAKKILKLRTQDKIWEEPKISDFGNFIHKVLEEYSKNYDQQNMLDQQQALLNIGNNILHSTILPTYTKKTWQTKLTLLSKAFILFDMERRKNCQKIYFEIKGELNLNIAGQNIKIIGIADRIEISKSNCITILDYKTGTIPTKKEIELGLSPQLIIESLMILENGFNISHSYAPLCHSCESGNPIENITIAYVKITSTEPYVQTTEISLSMETLEKHKQGLIRLLEYYVKNKSFVYDLDMSKYNDYLHLRG.

This is an uncharacterized protein from Rickettsia bellii (strain RML369-C).